Consider the following 23-residue polypeptide: Potassium channel toxin kappa-KTx 2.3 (23 aa).

Intrachain disulfides connect Cys-4–Cys-22 and Cys-8–Cys-18.

The protein belongs to the short scorpion toxin superfamily. Potassium channel inhibitor kappa-KTx family. Kappa-KTx 2 subfamily. As to expression, expressed by the venom gland.

It localises to the secreted. Decreases the amplitude of the potassium current of the rat channels Kv1.1/KCNA1 by 33% and Kv1.2/KCNA2 by 8% as well as human Kv1.3/KCNA3 by 70%. The protein is Potassium channel toxin kappa-KTx 2.3 of Opisthacanthus madagascariensis (Scorpion).